The sequence spans 461 residues: Ribosomal protein uS12 methylthiotransferase RimO (461 aa).

Positions 13–128 (PKVGFVSLGC…VMQHVHMHLP (116 aa)) constitute an MTTase N-terminal domain. 6 residues coordinate [4Fe-4S] cluster: Cys22, Cys58, Cys87, Cys159, Cys163, and Cys166. The 246-residue stretch at 145–390 (LTPRHYAYLK…MEVAEEVSAK (246 aa)) folds into the Radical SAM core domain. Positions 393-461 (AKKVGKTLKV…ADGHDLWGEV (69 aa)) constitute a TRAM domain.

Belongs to the methylthiotransferase family. RimO subfamily. The cofactor is [4Fe-4S] cluster.

The protein resides in the cytoplasm. The enzyme catalyses L-aspartate(89)-[ribosomal protein uS12]-hydrogen + (sulfur carrier)-SH + AH2 + 2 S-adenosyl-L-methionine = 3-methylsulfanyl-L-aspartate(89)-[ribosomal protein uS12]-hydrogen + (sulfur carrier)-H + 5'-deoxyadenosine + L-methionine + A + S-adenosyl-L-homocysteine + 2 H(+). Functionally, catalyzes the methylthiolation of an aspartic acid residue of ribosomal protein uS12. This Paraburkholderia xenovorans (strain LB400) protein is Ribosomal protein uS12 methylthiotransferase RimO.